A 26-amino-acid chain; its full sequence is Alpha-amylase inhibitor 1 (26 aa).

It belongs to the protease inhibitor I6 (cereal trypsin/alpha-amylase inhibitor) family.

It localises to the secreted. In terms of biological role, alpha-amylase inhibitor. This is Alpha-amylase inhibitor 1 from Saussurea costus (Costus).